The following is a 148-amino-acid chain: 3-hydroxyacyl-[acyl-carrier-protein] dehydratase FabZ (148 aa).

H55 is an active-site residue.

This sequence belongs to the thioester dehydratase family. FabZ subfamily.

The protein localises to the cytoplasm. It carries out the reaction a (3R)-hydroxyacyl-[ACP] = a (2E)-enoyl-[ACP] + H2O. In terms of biological role, involved in unsaturated fatty acids biosynthesis. Catalyzes the dehydration of short chain beta-hydroxyacyl-ACPs and long chain saturated and unsaturated beta-hydroxyacyl-ACPs. The sequence is that of 3-hydroxyacyl-[acyl-carrier-protein] dehydratase FabZ from Haemophilus influenzae (strain PittEE).